Here is a 225-residue protein sequence, read N- to C-terminus: Enolase-phosphatase E1 (225 aa).

This sequence belongs to the HAD-like hydrolase superfamily. MasA/MtnC family. As to quaternary structure, monomer. Mg(2+) is required as a cofactor.

The enzyme catalyses 5-methylsulfanyl-2,3-dioxopentyl phosphate + H2O = 1,2-dihydroxy-5-(methylsulfanyl)pent-1-en-3-one + phosphate. Its pathway is amino-acid biosynthesis; L-methionine biosynthesis via salvage pathway; L-methionine from S-methyl-5-thio-alpha-D-ribose 1-phosphate: step 3/6. The protein operates within amino-acid biosynthesis; L-methionine biosynthesis via salvage pathway; L-methionine from S-methyl-5-thio-alpha-D-ribose 1-phosphate: step 4/6. Functionally, bifunctional enzyme that catalyzes the enolization of 2,3-diketo-5-methylthiopentyl-1-phosphate (DK-MTP-1-P) into the intermediate 2-hydroxy-3-keto-5-methylthiopentenyl-1-phosphate (HK-MTPenyl-1-P), which is then dephosphorylated to form the acireductone 1,2-dihydroxy-3-keto-5-methylthiopentene (DHK-MTPene). This chain is Enolase-phosphatase E1, found in Shewanella halifaxensis (strain HAW-EB4).